A 513-amino-acid chain; its full sequence is ETS translocation variant 3 (513 aa).

The ETS DNA-binding region spans 35–116; it reads IQLWHFILEL…KGKRFTYKFN (82 aa). The tract at residues 138 to 202 is disordered; that stretch reads QSAPPVPTAS…DLEDGSASDW (65 aa). Residues Ser139, Ser159, and Ser315 each carry the phosphoserine modification. The interval 333-513 is disordered; it reads QMHPEEPSQF…ATTATAAADA (181 aa). Basic and acidic residues-rich tracts occupy residues 357–366, 380–392, and 399–419; these read ERVESREEAV, IKVE…DPDS, and GKEE…EEGK. Lys381 is covalently cross-linked (Glycyl lysine isopeptide (Lys-Gly) (interchain with G-Cter in SUMO2)). Lys388 is subject to N6-acetyllysine; alternate. Lys388 is covalently cross-linked (Glycyl lysine isopeptide (Lys-Gly) (interchain with G-Cter in SUMO2); alternate). Residues 430–439 are compositionally biased toward polar residues; sequence WPSVSISTPS. Residues 441–450 show a composition bias toward acidic residues; it reads EPLEGTEDSE. 2 stretches are compositionally biased toward basic and acidic residues: residues 451 to 466 and 477 to 489; these read DRSV…KEDA and RWND…ELNK. A compositionally biased stretch (low complexity) spans 504–513; the sequence is ATTATAAADA.

It belongs to the ETS family.

It is found in the nucleus. Its function is as follows. Transcriptional repressor that contribute to growth arrest during terminal macrophage differentiation by repressing target genes involved in Ras-dependent proliferation. Represses MMP1 promoter activity. This Mus musculus (Mouse) protein is ETS translocation variant 3 (Etv3).